Here is a 455-residue protein sequence, read N- to C-terminus: Homeobox protein 14 (455 aa).

Low complexity-rich tracts occupy residues 1-16 (MNHN…KNNS), 24-39 (SSRS…SSSG), 81-118 (TTTT…ESPN), 179-239 (ESPN…SPSF), and 263-294 (NNNN…TNNN). Disordered regions lie at residues 1 to 53 (MNHN…SSIN), 67 to 121 (KQTK…NCNK), 178 to 239 (SESP…SPSF), and 258 to 296 (TLLS…NNGD). 2 DNA-binding regions (homeobox) span residues 310-369 (KSGQ…SKSG) and 372-431 (SYAK…NKLS). The tract at residues 431-455 (SSKANQDNDNNNNNENNDDSYSDEG) is disordered. The segment covering 435 to 445 (NQDNDNNNNNE) has biased composition (low complexity). Acidic residues predominate over residues 446-455 (NNDDSYSDEG).

The protein resides in the nucleus. Its function is as follows. Putative transcription factor. In Dictyostelium discoideum (Social amoeba), this protein is Homeobox protein 14 (hbx14).